The primary structure comprises 580 residues: TRAF-type zinc finger domain-containing protein 1 (580 aa).

Alanine 2 carries the N-acetylalanine modification. Residues 27 to 103 form a TRAF-type zinc finger; that stretch reads IHEIHCQRNI…DLELSVLKLK (77 aa). Phosphoserine is present on serine 190. Over residues 197–209 the composition is skewed to polar residues; the sequence is TTNQRSMTAQFPI. A disordered region spans residues 197-236; that stretch reads TTNQRSMTAQFPIQNNLLEEQERQERNRSRQTPKERGEDS. A compositionally biased stretch (basic and acidic residues) spans 216-235; that stretch reads EQERQERNRSRQTPKERGED. A phosphoserine mark is found at serine 326, serine 414, and serine 429. Residues 392–580 are disordered; sequence PATANNHVSE…GAGDAEEEEE (189 aa). A compositionally biased stretch (basic and acidic residues) spans 409–419; sequence QPRETSPELPK. A compositionally biased stretch (low complexity) spans 453-463; that stretch reads PPNNTTAPPNR. Serine 469 bears the Phosphoserine mark.

Interacts with MAVS, TICAM1, TRAF1, TRAF2, TRAF3 and TRAF6.

Functionally, negative feedback regulator that controls excessive innate immune responses. Regulates both Toll-like receptor 4 (TLR4) and DDX58/RIG1-like helicases (RLH) pathways. May inhibit the LTR pathway by direct interaction with TRAF6 and attenuation of NF-kappa-B activation. May negatively regulate the RLH pathway downstream from MAVS and upstream of NF-kappa-B and IRF3. The protein is TRAF-type zinc finger domain-containing protein 1 (TRAFD1) of Bos taurus (Bovine).